The chain runs to 2570 residues: Stabilin-1 (2570 aa).

The signal sequence occupies residues 1–25 (MAGPRGLLPLCLLAFCLAGFSFVRG). Residues 26-2478 (QVLFKGCDVK…LAPEAPPVAA (2453 aa)) lie on the Extracellular side of the membrane. 4 EGF-like domains span residues 110 to 148 (HECPGGAETPCNGHGTCLDGMDRNGTCVCQENFRGSACQ), 156 to 193 (FGPDCQSVCSCVHGVCNHGPRGDGSCLCFAGYTGPHCD), 195 to 229 (ELPVCQELRCPQNTQCSAEAPSCRCLPGYTQQGSE), and 232 to 271 (APNPCWPSPCSLLAQCSVSPKGQAQCHCPENYHGDGMVCL). Intrachain disulfides connect C112–C126, C120–C136, C138–C147, C160–C171, C164–C181, C183–C192, C199–C210, C204–C217, C236–C247, C241–C257, and C259–C270. An N-linked (GlcNAc...) asparagine glycan is attached at N133. N-linked (GlcNAc...) asparagine glycosylation is found at N286, N312, N413, N606, N673, N712, and N745. FAS1 domains are found at residues 356–494 (YGHL…TGLR) and 506–641 (KRTI…DGIL). One can recognise an EGF-like 5 domain in the interval 728–768 (DCTQCPGGFSNPCYGKGNCSDGIQGNGACLCFPDYKGIACH). 3 cysteine pairs are disulfide-bonded: C732/C746, C740/C756, and C758/C767. An N-linked (GlcNAc...) asparagine glycan is attached at N816. EGF-like domains follow at residues 818–858 (SMGD…DGFS), 861–903 (PSNP…RVCV), 904–946 (AIDE…YQCS), and 947–986 (PIDPCRAGNGGCHGLATCRAVGGGQRVCTCPPGFGGDGFS). 10 disulfide bridges follow: C822/C837, C831/C846, C865/C879, C873/C889, C891/C902, C908/C922, C916/C932, C934/C945, C951/C964, and C958/C974. FAS1 domains follow at residues 988 to 1118 (YGDI…SQVL) and 1128 to 1253 (GQGL…SGVL). N1087, N1096, N1170, N1178, N1222, and N1274 each carry an N-linked (GlcNAc...) asparagine glycan. Positions 1327–1392 (TLCEPCPGGL…CDCAHGLCQE (66 aa)) constitute a Laminin EGF-like 1 domain. 3 disulfide bridges follow: C1332–C1346, C1340–C1356, and C1358–C1367. An N-linked (GlcNAc...) asparagine glycan is attached at N1378. 15 disulfide bridges follow: C1379–C1390, C1383–C1400, C1402–C1411, C1420–C1430, C1424–C1440, C1442–C1453, C1459–C1472, C1466–C1482, C1484–C1495, C1501–C1514, C1508–C1524, C1526–C1538, C1544–C1557, C1551–C1567, and C1569–C1581. 4 consecutive EGF-like domains span residues 1416 to 1454 (TSPQCPRKCDPNANCVQDSAGASTCACAAGYSGNGIFCS), 1455 to 1496 (EVDP…ELCQ), 1497 to 1539 (EINS…RTCE), and 1540 to 1582 (LLDP…LTCR). A glycan (N-linked (GlcNAc...) asparagine) is linked at N1471. FAS1 domains are found at residues 1582 to 1708 (RARV…DRVL) and 1724 to 1864 (PRRN…DQLL). Residues N1626 and N1727 are each glycosylated (N-linked (GlcNAc...) asparagine). One can recognise a Laminin EGF-like 2 domain in the interval 1966–2031 (SECQACPGGP…RCTVHGRCDE (66 aa)). 15 cysteine pairs are disulfide-bonded: C1971–C1985, C1979–C1995, C1997–C2006, C2018–C2029, C2023–C2039, C2041–C2050, C2060–C2070, C2064–C2076, C2078–C2089, C2095–C2108, C2102–C2117, C2119–C2130, C2136–C2150, C2144–C2160, and C2162–C2173. 3 EGF-like domains span residues 2056-2090 (LQPVCTPPCAPEAVCRAGNSCECSLGYEGDGRVCT), 2091-2131 (VADL…WSCR), and 2132-2174 (ARNP…LQCL). N-linked (GlcNAc...) asparagine glycosylation is present at N2107. The Link domain maps to 2206-2301 (RAGVFHLQAT…SERWDAYCFR (96 aa)). N2222, N2261, N2290, N2334, N2347, N2379, N2393, N2400, and N2424 each carry an N-linked (GlcNAc...) asparagine glycan. Disulfide bonds link C2230–C2299 and C2254–C2275. In terms of domain architecture, FAS1 7 spans 2322-2459 (NGKLLDVLAA…GIIHALASPL (138 aa)). A helical transmembrane segment spans residues 2479–2499 (GVGAVLAAGALLGLVAGALYL). Over 2500-2570 (RARGKPMGFG…PDTQRILTVK (71 aa)) the chain is Cytoplasmic.

Interacts with CHID1. As to expression, high levels found in spleen, lymph node, liver and placenta. Also expressed in endothelial cells.

It localises to the membrane. In terms of biological role, acts as a scavenger receptor for acetylated low density lipoprotein. Binds to both Gram-positive and Gram-negative bacteria and may play a role in defense against bacterial infection. When inhibited in endothelial tube formation assays, there is a marked decrease in cell-cell interactions, suggesting a role in angiogenesis. Involved in the delivery of newly synthesized CHID1/SI-CLP from the biosynthetic compartment to the endosomal/lysosomal system. The chain is Stabilin-1 (STAB1) from Homo sapiens (Human).